The chain runs to 361 residues: Peptide chain release factor 1 (361 aa).

N5-methylglutamine is present on Q238.

Belongs to the prokaryotic/mitochondrial release factor family. In terms of processing, methylated by PrmC. Methylation increases the termination efficiency of RF1.

The protein resides in the cytoplasm. Peptide chain release factor 1 directs the termination of translation in response to the peptide chain termination codons UAG and UAA. The protein is Peptide chain release factor 1 of Mesomycoplasma hyopneumoniae (strain 232) (Mycoplasma hyopneumoniae).